Consider the following 910-residue polypeptide: Anoctamin-6 (910 aa).

At 1–300 (MKKMSRNVLL…YGEKIGIYFA (300 aa)) the chain is on the cytoplasmic side. The chain crosses the membrane as a helical span at residues 301–321 (WLGYYTQMLLLAAVVGVACFL). The Extracellular segment spans residues 322–375 (YGYLNQDNCTWSKEVCHPDIGGKIIMCPQCDRLCPFWKLNITCESSKKLCIFDS). The N-linked (GlcNAc...) asparagine glycan is linked to Asn-329. Disulfide bonds link Cys-330–Cys-371, Cys-337–Cys-364, Cys-348–Cys-806, Cys-351–Cys-355, and Cys-595–Cys-600. Asn-361 is a glycosylation site (N-linked (GlcNAc...) asparagine). Residues 376-396 (FGTLVFAVFMGVWVTLFLEFW) form a helical membrane-spanning segment. Over 397-455 (KRRQAELEYEWDTVELQQEEQARPEYEARCTHVVINEITQEEERIPFTAWGKCIRITLC) the chain is Cytoplasmic. Residues 456–476 (ASAVFFWILLIIASVIGIIVY) traverse the membrane as a helical segment. Topologically, residues 477–509 (RLSVFIVFSAKLPKNINGTDPIQKYLTPQTATS) are extracellular. Asn-493 is a glycosylation site (N-linked (GlcNAc...) asparagine). Residues 510-530 (ITASIISFIIIMILNTIYEKV) form a helical membrane-spanning segment. Over 531-551 (AIMITNFELPRTQTDYENSLT) the chain is Cytoplasmic. Residues 552 to 572 (MKMFLFQFVNYYSSCFYIAFF) traverse the membrane as a helical segment. At 573 to 601 (KGKFVGYPGDPVYWLGKYRNEECDPGGCL) the chain is on the extracellular side. The chain crosses the membrane as a helical span at residues 602–621 (LELTTQLTIIMGGKAIWNNI). The Cytoplasmic segment spans residues 622–663 (QEVLLPWIMNLIGRFHRVSGSEKITPRWEQDYHLQPMGKLGL). Ca(2+) is bound by residues Glu-623, Glu-666, and Glu-669. 2 consecutive transmembrane segments (helical) span residues 664–684 (FYEYLEMIIQFGFVTLFVASF) and 685–705 (PLAPLLALVNNILEIRVDAWK). Residues 706–722 (LTTQFRRLVPEKAQDIG) lie on the Cytoplasmic side of the membrane. Residues 723–743 (AWQPIMQGIAILAVVTNAMII) traverse the membrane as a helical segment. Over 744–836 (AFTSDMIPRL…YWHVIAAKLA (93 aa)) the chain is Extracellular. N-linked (GlcNAc...) asparagine glycosylation is found at Asn-777, Asn-790, and Asn-802. A helical transmembrane segment spans residues 837–857 (FIIVMEHVIYSVKFFISYAIP). Over 858 to 910 (DVSKRTKSKIQREKYLTQKLLHENHLKDMTKNMGVIAERMIEAVDNNLRPKSE) the chain is Cytoplasmic.

This sequence belongs to the anoctamin family. Homodimer. Expressed in embryonic stem cell, fetal liver, retina, chronic myologenous leukemia and intestinal cancer.

It is found in the cell membrane. The enzyme catalyses a 1,2-diacyl-sn-glycero-3-phospho-L-serine(in) = a 1,2-diacyl-sn-glycero-3-phospho-L-serine(out). The catalysed reaction is a beta-D-galactosyl-(1&lt;-&gt;1')-N-acylsphing-4-enine(out) = a beta-D-galactosyl-(1&lt;-&gt;1')-N-acylsphing-4-enine(in). It carries out the reaction a 1,2-diacyl-sn-glycero-3-phosphocholine(in) = a 1,2-diacyl-sn-glycero-3-phosphocholine(out). With respect to regulation, exhibits synergistic gating by Ca(2+) and voltage. Inhibited by some non-specific cation channel blockers such as: ruthenium red, 2-aminoethyl diphenylborinate (2APB), gadolinium and cadmium ions. Its activity is regulated as follows. (Microbial infection) Activated by SARS coronavirus-2/SARS-CoV-2 spike protein. In terms of biological role, small-conductance calcium-activated nonselective cation (SCAN) channel which acts as a regulator of phospholipid scrambling in platelets and osteoblasts. Phospholipid scrambling results in surface exposure of phosphatidylserine which in platelets is essential to trigger the clotting system whereas in osteoblasts is essential for the deposition of hydroxyapatite during bone mineralization. Has calcium-dependent phospholipid scramblase activity; scrambles phosphatidylserine, phosphatidylcholine and galactosylceramide. Can generate outwardly rectifying chloride channel currents in airway epithelial cells and Jurkat T lymphocytes. Its function is as follows. (Microbial infection) Upon SARS coronavirus-2/SARS-CoV-2 infection, is activated by spike protein which increases the amplitude of spontaneous Ca(2+) signals and is required for spike-mediated syncytia. This chain is Anoctamin-6, found in Homo sapiens (Human).